Consider the following 238-residue polypeptide: Acyl-protein thioesterase 1 (238 aa).

Catalysis depends on charge relay system residues Ser120, Asp174, and His219.

It belongs to the AB hydrolase superfamily. AB hydrolase 2 family.

It is found in the cytoplasm. The protein localises to the nucleus. It catalyses the reaction S-hexadecanoyl-L-cysteinyl-[protein] + H2O = L-cysteinyl-[protein] + hexadecanoate + H(+). Its function is as follows. Hydrolyzes fatty acids from S-acylated cysteine residues in proteins with a strong preference for palmitoylated G-alpha proteins over other acyl substrates. Mediates the deacylation of G-alpha proteins such as GPA1 in vivo, but has weak or no activity toward palmitoylated Ras proteins. Has weak lysophospholipase activity in vitro; however such activity may not exist in vivo. The protein is Acyl-protein thioesterase 1 of Cryptococcus neoformans var. neoformans serotype D (strain B-3501A) (Filobasidiella neoformans).